The chain runs to 271 residues: Ribosomal RNA small subunit methyltransferase A (271 aa).

S-adenosyl-L-methionine-binding residues include Asn19, Leu21, Gly46, Glu67, Asp92, and Asn114.

The protein belongs to the class I-like SAM-binding methyltransferase superfamily. rRNA adenine N(6)-methyltransferase family. RsmA subfamily.

The protein resides in the cytoplasm. The enzyme catalyses adenosine(1518)/adenosine(1519) in 16S rRNA + 4 S-adenosyl-L-methionine = N(6)-dimethyladenosine(1518)/N(6)-dimethyladenosine(1519) in 16S rRNA + 4 S-adenosyl-L-homocysteine + 4 H(+). Specifically dimethylates two adjacent adenosines (A1518 and A1519) in the loop of a conserved hairpin near the 3'-end of 16S rRNA in the 30S particle. May play a critical role in biogenesis of 30S subunits. The chain is Ribosomal RNA small subunit methyltransferase A from Aeromonas hydrophila subsp. hydrophila (strain ATCC 7966 / DSM 30187 / BCRC 13018 / CCUG 14551 / JCM 1027 / KCTC 2358 / NCIMB 9240 / NCTC 8049).